The primary structure comprises 222 residues: Ribose-5-phosphate isomerase A (222 aa).

Residues 29–32 (TGST), 82–85 (DSAD), and 95–98 (KGGG) contribute to the substrate site. Glu-104 functions as the Proton acceptor in the catalytic mechanism. Lys-122 is a binding site for substrate.

This sequence belongs to the ribose 5-phosphate isomerase family. Homodimer.

It catalyses the reaction aldehydo-D-ribose 5-phosphate = D-ribulose 5-phosphate. The protein operates within carbohydrate degradation; pentose phosphate pathway; D-ribose 5-phosphate from D-ribulose 5-phosphate (non-oxidative stage): step 1/1. Catalyzes the reversible conversion of ribose-5-phosphate to ribulose 5-phosphate. The sequence is that of Ribose-5-phosphate isomerase A from Blochmanniella floridana.